Consider the following 132-residue polypeptide: Small ribosomal subunit protein uS8 (132 aa).

The protein belongs to the universal ribosomal protein uS8 family. As to quaternary structure, part of the 30S ribosomal subunit. Contacts proteins S5 and S12.

In terms of biological role, one of the primary rRNA binding proteins, it binds directly to 16S rRNA central domain where it helps coordinate assembly of the platform of the 30S subunit. This Borrelia garinii subsp. bavariensis (strain ATCC BAA-2496 / DSM 23469 / PBi) (Borreliella bavariensis) protein is Small ribosomal subunit protein uS8.